The primary structure comprises 305 residues: Aurora/IPL1-related protein kinase 2 (305 aa).

The Protein kinase domain maps to 30 to 280; sequence FEIGRPLGKG…LEQVKEHYWI (251 aa). ATP-binding positions include 36-44 and K59; that span reads LGKGKFGSV. D153 (proton acceptor) is an active-site residue.

Belongs to the protein kinase superfamily. Ser/Thr protein kinase family. Aurora subfamily. Component of the CPC complex which consists of icp-1; csc-1; bir-1 and air-2. Within the complex, interacts with icp-1; csc-1 and bir-1. Interacts with zen-4. Interacts with tlk-1 and bmk-1. In terms of processing, phosphorylated. Increased phosphorylation upon chromatin obstructions at anaphase.

It is found in the cytoplasm. The protein resides in the cytoskeleton. It localises to the chromosome. Its subcellular location is the midbody. The protein localises to the spindle. The catalysed reaction is L-seryl-[protein] + ATP = O-phospho-L-seryl-[protein] + ADP + H(+). The enzyme catalyses L-threonyl-[protein] + ATP = O-phospho-L-threonyl-[protein] + ADP + H(+). In terms of biological role, serine/threonine-protein kinase component of the chromosomal passenger complex (CPC), a complex that acts as a key regulator of chromosome segregation and cytokinesis. The CPC complex has essential functions at the centromere in ensuring correct chromosome alignment and segregation. Required for histone H3 phosphorylation during segregation of homologous chromosomes in meiosis and mitosis. Required for histone H3 'Ser-10' phosphorylation. Phosphorylates tlk-1 at 'Ser-634', which enhances its activity. Phosphorylates zen-4 at 'Ser-680'. Required for the recruitment of bub-1 to the ring-shaped domain between chromosomes during meiotic anaphase I. Also required for the localization of the condensin I complex subunit smc-4 to mitotic chromosomes. Acts at the spindle midzone and the midbody to prevent cleavage furrow regression upon chromatin obstructions during cytokinesis. In Caenorhabditis elegans, this protein is Aurora/IPL1-related protein kinase 2.